The chain runs to 160 residues: Probable cyclic pyranopterin monophosphate synthase (160 aa).

Residues 1-12 (MSDDSELTHVTD) show a composition bias toward basic and acidic residues. Residues 1–24 (MSDDSELTHVTDDGDAQMVDVGEK) are disordered. Substrate contacts are provided by residues 78-80 (MCH) and 114-115 (ME). The active site involves Asp-129.

Belongs to the MoaC family. In terms of assembly, homohexamer; trimer of dimers.

The enzyme catalyses (8S)-3',8-cyclo-7,8-dihydroguanosine 5'-triphosphate = cyclic pyranopterin phosphate + diphosphate. It functions in the pathway cofactor biosynthesis; molybdopterin biosynthesis. Catalyzes the conversion of (8S)-3',8-cyclo-7,8-dihydroguanosine 5'-triphosphate to cyclic pyranopterin monophosphate (cPMP). This chain is Probable cyclic pyranopterin monophosphate synthase, found in Natronomonas pharaonis (strain ATCC 35678 / DSM 2160 / CIP 103997 / JCM 8858 / NBRC 14720 / NCIMB 2260 / Gabara) (Halobacterium pharaonis).